A 350-amino-acid chain; its full sequence is 4-hydroxy-3-methylbut-2-enyl diphosphate reductase (350 aa).

Cys36 provides a ligand contact to [4Fe-4S] cluster. (2E)-4-hydroxy-3-methylbut-2-enyl diphosphate is bound by residues His65 and His101. Residues His65 and His101 each contribute to the dimethylallyl diphosphate site. 2 residues coordinate isopentenyl diphosphate: His65 and His101. Position 123 (Cys123) interacts with [4Fe-4S] cluster. His151 serves as a coordination point for (2E)-4-hydroxy-3-methylbut-2-enyl diphosphate. His151 serves as a coordination point for dimethylallyl diphosphate. His151 provides a ligand contact to isopentenyl diphosphate. Glu153 serves as the catalytic Proton donor. Thr192 is a binding site for (2E)-4-hydroxy-3-methylbut-2-enyl diphosphate. [4Fe-4S] cluster is bound at residue Cys222. Ser250, Ser251, Asn252, and Ser295 together coordinate (2E)-4-hydroxy-3-methylbut-2-enyl diphosphate. Ser250, Ser251, Asn252, and Ser295 together coordinate dimethylallyl diphosphate. Isopentenyl diphosphate contacts are provided by Ser250, Ser251, Asn252, and Ser295.

It belongs to the IspH family. The cofactor is [4Fe-4S] cluster.

It carries out the reaction isopentenyl diphosphate + 2 oxidized [2Fe-2S]-[ferredoxin] + H2O = (2E)-4-hydroxy-3-methylbut-2-enyl diphosphate + 2 reduced [2Fe-2S]-[ferredoxin] + 2 H(+). It catalyses the reaction dimethylallyl diphosphate + 2 oxidized [2Fe-2S]-[ferredoxin] + H2O = (2E)-4-hydroxy-3-methylbut-2-enyl diphosphate + 2 reduced [2Fe-2S]-[ferredoxin] + 2 H(+). It functions in the pathway isoprenoid biosynthesis; dimethylallyl diphosphate biosynthesis; dimethylallyl diphosphate from (2E)-4-hydroxy-3-methylbutenyl diphosphate: step 1/1. The protein operates within isoprenoid biosynthesis; isopentenyl diphosphate biosynthesis via DXP pathway; isopentenyl diphosphate from 1-deoxy-D-xylulose 5-phosphate: step 6/6. Its function is as follows. Catalyzes the conversion of 1-hydroxy-2-methyl-2-(E)-butenyl 4-diphosphate (HMBPP) into a mixture of isopentenyl diphosphate (IPP) and dimethylallyl diphosphate (DMAPP). Acts in the terminal step of the DOXP/MEP pathway for isoprenoid precursor biosynthesis. The sequence is that of 4-hydroxy-3-methylbut-2-enyl diphosphate reductase from Rhizobium meliloti (strain 1021) (Ensifer meliloti).